The following is a 56-amino-acid chain: UPF0434 protein ECH_0194 (56 aa).

Belongs to the UPF0434 family.

The polypeptide is UPF0434 protein ECH_0194 (Ehrlichia chaffeensis (strain ATCC CRL-10679 / Arkansas)).